The primary structure comprises 269 residues: Shikimate dehydrogenase (NADP(+)) (269 aa).

Shikimate contacts are provided by residues 15 to 17 (SLS) and threonine 62. The active-site Proton acceptor is the lysine 66. Shikimate-binding residues include asparagine 86 and aspartate 99. Residues 123 to 127 (GAGGA), 146 to 151 (NRTTAK), and leucine 213 each bind NADP(+). Tyrosine 215 contacts shikimate. Glycine 236 is an NADP(+) binding site.

The protein belongs to the shikimate dehydrogenase family. As to quaternary structure, homodimer.

The enzyme catalyses shikimate + NADP(+) = 3-dehydroshikimate + NADPH + H(+). The protein operates within metabolic intermediate biosynthesis; chorismate biosynthesis; chorismate from D-erythrose 4-phosphate and phosphoenolpyruvate: step 4/7. Functionally, involved in the biosynthesis of the chorismate, which leads to the biosynthesis of aromatic amino acids. Catalyzes the reversible NADPH linked reduction of 3-dehydroshikimate (DHSA) to yield shikimate (SA). The polypeptide is Shikimate dehydrogenase (NADP(+)) (Methanocella arvoryzae (strain DSM 22066 / NBRC 105507 / MRE50)).